A 250-amino-acid polypeptide reads, in one-letter code: Small ribosomal subunit protein uS3 (250 aa).

Residues 39–107 (VRAALKKRLY…EVHLNIVEIR (69 aa)) enclose the KH type-2 domain. Positions 215-250 (LDKRLATESGPAGEGGGRERGDRPDRGDRRDRRDRA) are disordered. The segment covering 230–250 (GGRERGDRPDRGDRRDRRDRA) has biased composition (basic and acidic residues).

Belongs to the universal ribosomal protein uS3 family. As to quaternary structure, part of the 30S ribosomal subunit. Forms a tight complex with proteins S10 and S14.

Functionally, binds the lower part of the 30S subunit head. Binds mRNA in the 70S ribosome, positioning it for translation. The chain is Small ribosomal subunit protein uS3 from Caulobacter vibrioides (strain ATCC 19089 / CIP 103742 / CB 15) (Caulobacter crescentus).